A 142-amino-acid chain; its full sequence is Nucleoside diphosphate kinase (142 aa).

The ATP site is built by Lys11, Phe59, Arg87, Thr93, Arg104, and Asn114. His117 functions as the Pros-phosphohistidine intermediate in the catalytic mechanism.

Belongs to the NDK family. The cofactor is Mg(2+).

It is found in the cytoplasm. It catalyses the reaction a 2'-deoxyribonucleoside 5'-diphosphate + ATP = a 2'-deoxyribonucleoside 5'-triphosphate + ADP. It carries out the reaction a ribonucleoside 5'-diphosphate + ATP = a ribonucleoside 5'-triphosphate + ADP. Its function is as follows. Major role in the synthesis of nucleoside triphosphates other than ATP. The ATP gamma phosphate is transferred to the NDP beta phosphate via a ping-pong mechanism, using a phosphorylated active-site intermediate. This Hyperthermus butylicus (strain DSM 5456 / JCM 9403 / PLM1-5) protein is Nucleoside diphosphate kinase.